A 189-amino-acid polypeptide reads, in one-letter code: Cell division protein SepF (189 aa).

2 disordered regions span residues 1–75 (MEGQ…GLPG) and 155–174 (STPS…SPTP).

This sequence belongs to the SepF family. Homodimer. Interacts with FtsZ.

It localises to the cytoplasm. In terms of biological role, cell division protein that is part of the divisome complex and is recruited early to the Z-ring. Probably stimulates Z-ring formation, perhaps through the cross-linking of FtsZ protofilaments. Its function overlaps with FtsA. This chain is Cell division protein SepF, found in Synechococcus sp. (strain JA-3-3Ab) (Cyanobacteria bacterium Yellowstone A-Prime).